Reading from the N-terminus, the 176-residue chain is Cytidylate kinase (176 aa).

7-15 (GPPGSGTTS) provides a ligand contact to ATP.

It belongs to the cytidylate kinase family. Type 2 subfamily.

It localises to the cytoplasm. The catalysed reaction is CMP + ATP = CDP + ADP. It carries out the reaction dCMP + ATP = dCDP + ADP. The chain is Cytidylate kinase from Methanosphaerula palustris (strain ATCC BAA-1556 / DSM 19958 / E1-9c).